A 162-amino-acid polypeptide reads, in one-letter code: Class I hydrophobin dewC (162 aa).

The N-terminal stretch at 1–21 (MQFTIASLIATAVLGLQMASA) is a signal peptide. Cystine bridges form between cysteine 43–cysteine 119, cysteine 50–cysteine 113, cysteine 51–cysteine 90, and cysteine 120–cysteine 156.

The protein belongs to the fungal hydrophobin family. In terms of assembly, self-assembles to form functional amyloid fibrils called rodlets. Self-assembly into fibrillar rodlets occurs spontaneously at hydrophobic:hydrophilic interfaces and the rodlets further associate laterally to form amphipathic monolayers.

It localises to the secreted. It is found in the spore wall. Functionally, aerial growth, conidiation, and dispersal of filamentous fungi in the environment rely upon a capability of their secreting small amphipathic proteins called hydrophobins (HPBs) with low sequence identity. Class I can self-assemble into an outermost layer of rodlet bundles on aerial cell surfaces, conferring cellular hydrophobicity that supports fungal growth, development and dispersal; whereas Class II form highly ordered films at water-air interfaces through intermolecular interactions but contribute nothing to the rodlet structure. DewC is a class I hydrophobin that contributes to the hydrophobicity of the spore surface. This Emericella nidulans (strain FGSC A4 / ATCC 38163 / CBS 112.46 / NRRL 194 / M139) (Aspergillus nidulans) protein is Class I hydrophobin dewC.